The sequence spans 405 residues: MKFVDEVSIFVKAGDGGNGMMSFRREKFIEKGGPNGGDGGDGGSVYLEADENLNTLVDYRYTRRFQAQNGQKGGSTDCTGAKGEDLILPVPVGTTVIDAATQEIMGDLTKAGQRLLVAQGGWHGLGNTRFKSSTNRAPRQTTPGKPGDARDLKLELKVLADVGLLGLPNAGKSTFIRSVSAAKPKVADYPFTTLVPNLGVVSVGRYKSFVIADIPGLIEGASEGAGLGIRFLKHLARTRLLLHLVDMAPLDGSDPADAAEVILHELEKFSPALTQRDRWLVLNKADQLLEEEREERVRHVVERLDWKGPVFVISALESEGTEALSQAIMRYLDERAVRIAEEPEYAEALAELDRQIEDEARARLQELDDQRALRRAGVKSVEEADDDDFDDDDDDEGGAEIIYVR.

The 159-residue stretch at 1 to 159 (MKFVDEVSIF…RDLKLELKVL (159 aa)) folds into the Obg domain. The segment at 127–148 (NTRFKSSTNRAPRQTTPGKPGD) is disordered. The segment covering 129–143 (RFKSSTNRAPRQTTP) has biased composition (polar residues). Residues 160–333 (ADVGLLGLPN…LSQAIMRYLD (174 aa)) enclose the OBG-type G domain. Residues 166-173 (GLPNAGKS), 191-195 (FTTLV), 213-216 (DIPG), 283-286 (NKAD), and 314-316 (SAL) each bind GTP. S173 and T193 together coordinate Mg(2+). The tract at residues 373 to 405 (LRRAGVKSVEEADDDDFDDDDDDEGGAEIIYVR) is disordered. Positions 383-398 (EADDDDFDDDDDDEGG) are enriched in acidic residues.

Belongs to the TRAFAC class OBG-HflX-like GTPase superfamily. OBG GTPase family. Monomer. Mg(2+) serves as cofactor.

The protein localises to the cytoplasm. Functionally, an essential GTPase which binds GTP, GDP and possibly (p)ppGpp with moderate affinity, with high nucleotide exchange rates and a fairly low GTP hydrolysis rate. Plays a role in control of the cell cycle, stress response, ribosome biogenesis and in those bacteria that undergo differentiation, in morphogenesis control. The sequence is that of GTPase Obg from Stutzerimonas stutzeri (strain A1501) (Pseudomonas stutzeri).